The following is a 250-amino-acid chain: Probable aquaporin TIP-type (250 aa).

Transmembrane regions (helical) follow at residues 22–42 (AGLAEFISTFIFVFAGSGSGI) and 56–76 (AGLISASIAHAFALFVAVSVG). The NPA 1 signature appears at 85–87 (NPA). Transmembrane regions (helical) follow at residues 104 to 124 (IVYIIAQLLGSIVASALLVFV), 138 to 158 (VGVGPALVLEIVMTFGLVYTV), and 170 to 190 (IGIIAPIAIGFIVGANILVGG). The NPA 2 motif lies at 198–200 (NPA). A helical transmembrane segment spans residues 218 to 238 (YWAGPLIGGGIAGLVYEVLFI).

The protein belongs to the MIP/aquaporin (TC 1.A.8) family. TIP (TC 1.A.8.10) subfamily.

It is found in the membrane. Its function is as follows. Aquaporins facilitate the transport of water and small neutral solutes across cell membranes. May have a role in buffering osmotic fluctations in the highly compartmented vacuole of arbuscule cells. The polypeptide is Probable aquaporin TIP-type (AQP1) (Medicago truncatula (Barrel medic)).